The following is a 122-amino-acid chain: Small ribosomal subunit protein uS13 (122 aa).

A disordered region spans residues 99–122; that stretch reads RGQRTHTNARTRKGPAKAIAGKKK.

The protein belongs to the universal ribosomal protein uS13 family. Part of the 30S ribosomal subunit. Forms a loose heterodimer with protein S19. Forms two bridges to the 50S subunit in the 70S ribosome.

Functionally, located at the top of the head of the 30S subunit, it contacts several helices of the 16S rRNA. In the 70S ribosome it contacts the 23S rRNA (bridge B1a) and protein L5 of the 50S subunit (bridge B1b), connecting the 2 subunits; these bridges are implicated in subunit movement. Contacts the tRNAs in the A and P-sites. This chain is Small ribosomal subunit protein uS13, found in Rhodopseudomonas palustris (strain BisB5).